Consider the following 475-residue polypeptide: Sulfate adenylyltransferase subunit 1 (475 aa).

The tr-type G domain occupies 24 to 240; the sequence is KSLLRFLTCG…ESAEVERELE (217 aa). The tract at residues 33–40 is G1; sequence GSVDDGKS. 33–40 provides a ligand contact to GTP; that stretch reads GSVDDGKS. Positions 91–95 are G2; it reads GITID. Positions 112–115 are G3; sequence DTPG. GTP-binding positions include 112–116 and 167–170; these read DTPGH and NKMD. The segment at 167 to 170 is G4; sequence NKMD. A G5 region spans residues 204 to 206; the sequence is SAL.

This sequence belongs to the TRAFAC class translation factor GTPase superfamily. Classic translation factor GTPase family. CysN/NodQ subfamily. As to quaternary structure, heterodimer composed of CysD, the smaller subunit, and CysN.

The enzyme catalyses sulfate + ATP + H(+) = adenosine 5'-phosphosulfate + diphosphate. Its pathway is sulfur metabolism; hydrogen sulfide biosynthesis; sulfite from sulfate: step 1/3. Its function is as follows. With CysD forms the ATP sulfurylase (ATPS) that catalyzes the adenylation of sulfate producing adenosine 5'-phosphosulfate (APS) and diphosphate, the first enzymatic step in sulfur assimilation pathway. APS synthesis involves the formation of a high-energy phosphoric-sulfuric acid anhydride bond driven by GTP hydrolysis by CysN coupled to ATP hydrolysis by CysD. The sequence is that of Sulfate adenylyltransferase subunit 1 from Aeromonas hydrophila subsp. hydrophila (strain ATCC 7966 / DSM 30187 / BCRC 13018 / CCUG 14551 / JCM 1027 / KCTC 2358 / NCIMB 9240 / NCTC 8049).